The sequence spans 429 residues: Trigger factor (429 aa).

Positions 162–247 constitute a PPIase FKBP-type domain; the sequence is DDTVDLAFEG…INAIKKLRQP (86 aa).

It belongs to the FKBP-type PPIase family. Tig subfamily.

It is found in the cytoplasm. The enzyme catalyses [protein]-peptidylproline (omega=180) = [protein]-peptidylproline (omega=0). Functionally, involved in protein export. Acts as a chaperone by maintaining the newly synthesized protein in an open conformation. Functions as a peptidyl-prolyl cis-trans isomerase. The polypeptide is Trigger factor (Fusobacterium nucleatum subsp. nucleatum (strain ATCC 25586 / DSM 15643 / BCRC 10681 / CIP 101130 / JCM 8532 / KCTC 2640 / LMG 13131 / VPI 4355)).